The chain runs to 209 residues: uncharacterized protein (209 aa).

May influence the expression of the nuc gene. This is an uncharacterized protein from Shigella flexneri.